The primary structure comprises 131 residues: Large ribosomal subunit protein eL32 (131 aa).

It belongs to the eukaryotic ribosomal protein eL32 family.

This chain is Large ribosomal subunit protein eL32 (RPL32), found in Eremothecium gossypii (strain ATCC 10895 / CBS 109.51 / FGSC 9923 / NRRL Y-1056) (Yeast).